The chain runs to 372 residues: Molybdopterin synthase catalytic subunit (372 aa).

Substrate-binding positions include 101–102 (HR), lysine 117, and 124–126 (KKE).

Belongs to the MoaE family. MOCS2B subfamily. Heterotetramer; composed of 2 small (Mocs2A) and 2 large (Mocs2B) subunits.

Its subcellular location is the cytoplasm. The enzyme catalyses 2 [molybdopterin-synthase sulfur-carrier protein]-C-terminal-Gly-aminoethanethioate + cyclic pyranopterin phosphate + H2O = molybdopterin + 2 [molybdopterin-synthase sulfur-carrier protein]-C-terminal Gly-Gly + 2 H(+). The protein operates within cofactor biosynthesis; molybdopterin biosynthesis. Functionally, catalytic subunit of the molybdopterin synthase complex, a complex that catalyzes the conversion of precursor Z into molybdopterin. Acts by mediating the incorporation of 2 sulfur atoms from thiocarboxylated Mocs2A into precursor Z to generate a dithiolene group. This Drosophila willistoni (Fruit fly) protein is Molybdopterin synthase catalytic subunit.